The primary structure comprises 160 residues: uncharacterized protein (160 aa).

Residues 7-151 (LLINYKTLEE…NPLIWHPDMD (145 aa)) form the N-acetyltransferase domain.

This is an uncharacterized protein from Bacillus subtilis (strain 168).